Reading from the N-terminus, the 171-residue chain is 3-hydroxydecanoyl-[acyl-carrier-protein] dehydratase (171 aa).

Residue histidine 70 is part of the active site.

The protein belongs to the thioester dehydratase family. FabA subfamily. As to quaternary structure, homodimer.

It is found in the cytoplasm. It carries out the reaction a (3R)-hydroxyacyl-[ACP] = a (2E)-enoyl-[ACP] + H2O. The enzyme catalyses (3R)-hydroxydecanoyl-[ACP] = (2E)-decenoyl-[ACP] + H2O. It catalyses the reaction (2E)-decenoyl-[ACP] = (3Z)-decenoyl-[ACP]. It participates in lipid metabolism; fatty acid biosynthesis. In terms of biological role, necessary for the introduction of cis unsaturation into fatty acids. Catalyzes the dehydration of (3R)-3-hydroxydecanoyl-ACP to E-(2)-decenoyl-ACP and then its isomerization to Z-(3)-decenoyl-ACP. Can catalyze the dehydratase reaction for beta-hydroxyacyl-ACPs with saturated chain lengths up to 16:0, being most active on intermediate chain length. In Pseudoalteromonas translucida (strain TAC 125), this protein is 3-hydroxydecanoyl-[acyl-carrier-protein] dehydratase.